We begin with the raw amino-acid sequence, 805 residues long: Transforming acidic coiled-coil-containing protein 1 (805 aa).

Residue Ala2 is modified to N-acetylalanine. The N-myristoyl glycine moiety is linked to residue Ala2. Residues 2–55 (AFSPWQILSPVQWAKWTWSAVRGGAAGEDEAGGPEGDPEEEDSQAETKSLSFSS) form an interaction with LSM7 and SNRPG region. Residues Ser4, Ser10, and Ser44 each carry the phosphoserine modification. Positions 23 to 140 (RGGAAGEDEA…SVKNFREEPE (118 aa)) are disordered. The segment covering 28–45 (GEDEAGGPEGDPEEEDSQ) has biased composition (acidic residues). Composition is skewed to polar residues over residues 47 to 60 (ETKS…SEGN) and 111 to 128 (SKTC…QAID). Over residues 130–140 (HSVKNFREEPE) the composition is skewed to basic and acidic residues. Phosphoserine is present on residues Ser147 and Ser153. The interval 152–259 (FSIETKDSTD…TNAAVEGTPL (108 aa)) is interaction with TDRD7. The tract at residues 206 to 427 (EASAEADLKA…DPDNFDESMD (222 aa)) is interaction with YEATS4. SPAZ domains follow at residues 215 to 297 (AGNS…TPGT) and 359 to 507 (SKSA…TDEE). The segment at 215 to 457 (AGNSCPELVP…VNEILESPKK (243 aa)) is disordered. The Bipartite nuclear localization signal 1 signature appears at 226–241 (RRSKLRKPKPVPLRKK). Residues 226–242 (RRSKLRKPKPVPLRKKA) show a composition bias toward basic residues. A Phosphoserine; by AURKC modification is found at Ser228. Phosphoserine is present on residues Ser248 and Ser276. Polar residues-rich tracts occupy residues 296–305 (GTLSSDTNDS), 377–413 (LSQT…SSEG), and 431–447 (PTTT…TGNH). Phosphoserine is present on residues Ser381 and Ser406. The Bipartite nuclear localization signal 2 signature appears at 455–471 (PKKAKSRLITSGCKVKK). Ser483 carries the phosphoserine modification. A disordered region spans residues 493–526 (ISDISNRDGHATDEEKLASTSCGQKSAGAEVKGE). The segment covering 497-509 (SNRDGHATDEEKL) has biased composition (basic and acidic residues). Position 533 is a phosphotyrosine (Tyr533). The residue at position 591 (Ser591) is a Phosphoserine. Positions 610 to 805 (IREEIITKEI…ELIAKLGKTD (196 aa)) form a coiled coil. Residues 701-805 (VLEGFKKNEE…ELIAKLGKTD (105 aa)) form an interaction with CH-TOG region.

Belongs to the TACC family. Interacts with KIAA0097/CH-TOG and with the oncogenic transcription factor YEATS4. Interacts with AURKA, AURKB and AURKC. Interacts with LSM7, TDRD7 and SNRPG. Interacts with GCN5L2 and PCAF. Interacts with the thyroid hormone receptors THRB and THRA, predominantly with isoform alpha-2. The interaction with THRA isoform alpha-1 and THRB is decreased in the presence of thyroid hormone T3. Also interacts with other nuclear receptors, including ESR1, NR3C1, PPARG, RARA and RXRA, preferentially in the absence of their hormonal ligands. In terms of processing, isoform 1 is heavily phosphorylated; isoform 6 is not. Isoform 1, isoform 3 and isoform 5 are ubiquitous. Isoform 2 is strongly expressed in the brain, weakly detectable in lung and colon, and overexpressed in gastric cancer. Isoform 4 is not detected in normal tissues, but strong expression was found in gastric cancer tissues. Down-regulated in a subset of cases of breast cancer.

The protein resides in the cytoplasm. The protein localises to the nucleus. It localises to the cytoskeleton. It is found in the microtubule organizing center. Its subcellular location is the centrosome. The protein resides in the midbody. The protein localises to the membrane. Involved in transcription regulation induced by nuclear receptors, including in T3 thyroid hormone and all-trans retinoic acid pathways. Might promote the nuclear localization of the receptors. Likely involved in the processes that promote cell division prior to the formation of differentiated tissues. The polypeptide is Transforming acidic coiled-coil-containing protein 1 (TACC1) (Homo sapiens (Human)).